The chain runs to 296 residues: Urease operon transcriptional activator (296 aa).

The HTH araC/xylS-type domain occupies Gln171 to Gln268. 2 consecutive DNA-binding regions (H-T-H motif) follow at residues Asp188 to Gly209 and Val235 to Tyr258.

Its function is as follows. Positive regulator of the expression of the urease operon. The sequence is that of Urease operon transcriptional activator (ureR) from Escherichia coli.